Reading from the N-terminus, the 267-residue chain is Regulatory protein VirG (267 aa).

In terms of domain architecture, Response regulatory spans 29–143 (HVLLVDDDVA…EFLARIRVAL (115 aa)). Asp-78 is subject to 4-aspartylphosphate. Positions 155-255 (RRSFCFTDWT…ARGAGYFFDA (101 aa)) form a DNA-binding region, ompR/PhoB-type.

Phosphorylated by wide host range (WHR) VirA protein.

The protein resides in the cytoplasm. Functionally, virG is required for the positive regulation of at least two vir loci encoded by the Ti plasmid of A.tumefaciens. The chain is Regulatory protein VirG (virG) from Agrobacterium tumefaciens (strain 15955).